The sequence spans 508 residues: Aromatase (508 aa).

Cys437 contacts heme.

Belongs to the cytochrome P450 family. Heme is required as a cofactor.

It localises to the membrane. The catalysed reaction is testosterone + 3 reduced [NADPH--hemoprotein reductase] + 3 O2 = 17beta-estradiol + formate + 3 oxidized [NADPH--hemoprotein reductase] + 4 H2O + 4 H(+). The enzyme catalyses androst-4-ene-3,17-dione + 3 reduced [NADPH--hemoprotein reductase] + 3 O2 = estrone + formate + 3 oxidized [NADPH--hemoprotein reductase] + 4 H2O + 4 H(+). Its function is as follows. Catalyzes the formation of aromatic C18 estrogens from C19 androgens. The polypeptide is Aromatase (Cyp19a1) (Rattus norvegicus (Rat)).